Here is a 348-residue protein sequence, read N- to C-terminus: Heat-inducible transcription repressor HrcA (348 aa).

The protein belongs to the HrcA family.

In terms of biological role, negative regulator of class I heat shock genes (grpE-dnaK-dnaJ and groELS operons). Prevents heat-shock induction of these operons. The chain is Heat-inducible transcription repressor HrcA from Chlorobium chlorochromatii (strain CaD3).